Here is a 312-residue protein sequence, read N- to C-terminus: Ribosomal RNA small subunit methyltransferase H (312 aa).

S-adenosyl-L-methionine-binding positions include 32-34 (AGH), D52, F79, D100, and Q107.

Belongs to the methyltransferase superfamily. RsmH family.

It localises to the cytoplasm. The enzyme catalyses cytidine(1402) in 16S rRNA + S-adenosyl-L-methionine = N(4)-methylcytidine(1402) in 16S rRNA + S-adenosyl-L-homocysteine + H(+). In terms of biological role, specifically methylates the N4 position of cytidine in position 1402 (C1402) of 16S rRNA. This Listeria monocytogenes serotype 4b (strain F2365) protein is Ribosomal RNA small subunit methyltransferase H.